Reading from the N-terminus, the 331-residue chain is uncharacterized protein (331 aa).

Pentapeptide repeat domains follow at residues 50–89 (ENLQ…RLGH), 90–129 (CQMN…NFKG), 140–179 (ANLR…NLQE), 185–224 (ANLR…KLTG), and 230–269 (TNLS…NLTQ).

This is an uncharacterized protein from Synechocystis sp. (strain ATCC 27184 / PCC 6803 / Kazusa).